The sequence spans 344 residues: Nicotinate-nucleotide--dimethylbenzimidazole phosphoribosyltransferase (344 aa).

The Proton acceptor role is filled by Glu310.

Belongs to the CobT family.

It carries out the reaction 5,6-dimethylbenzimidazole + nicotinate beta-D-ribonucleotide = alpha-ribazole 5'-phosphate + nicotinate + H(+). It participates in nucleoside biosynthesis; alpha-ribazole biosynthesis; alpha-ribazole from 5,6-dimethylbenzimidazole: step 1/2. In terms of biological role, catalyzes the synthesis of alpha-ribazole-5'-phosphate from nicotinate mononucleotide (NAMN) and 5,6-dimethylbenzimidazole (DMB). This is Nicotinate-nucleotide--dimethylbenzimidazole phosphoribosyltransferase from Chromobacterium violaceum (strain ATCC 12472 / DSM 30191 / JCM 1249 / CCUG 213 / NBRC 12614 / NCIMB 9131 / NCTC 9757 / MK).